Reading from the N-terminus, the 650-residue chain is Phosphatidylinositol 4-kinase gamma 7 (650 aa).

Positions R46–R103 constitute a Ubiquitin-like; degenerate domain. Residues G166–P463 form the PI3K/PI4K catalytic domain. The G-loop stretch occupies residues V172–G178. ATP is bound by residues H173–A179, K194, and Q283–V286. The segment at F316–N324 is catalytic loop. Residues P343–L369 are activation loop. Position 345 (D345) interacts with ATP. 2 disordered regions span residues S508–V534 and S560–N595. Acidic residues predominate over residues I516–K529. 2 stretches are compositionally biased toward polar residues: residues S560 to S569 and E585 to N595. S593 is subject to Phosphoserine.

The protein belongs to the PI3/PI4-kinase family. Type II PI4K subfamily.

It carries out the reaction a 1,2-diacyl-sn-glycero-3-phospho-(1D-myo-inositol) + ATP = a 1,2-diacyl-sn-glycero-3-phospho-(1D-myo-inositol 4-phosphate) + ADP + H(+). Functionally, the phosphorylation of phosphatidylinositol (PI) to PI4P is the first committed step in the generation of phosphatidylinositol 4,5-bisphosphate (PIP2), a precursor of the second messenger inositol 1,4,5-trisphosphate (InsP3). Undergoes autophosphorylation and phosphorylates serine/threonine residues of protein substrates. This Arabidopsis thaliana (Mouse-ear cress) protein is Phosphatidylinositol 4-kinase gamma 7.